The following is a 224-amino-acid chain: Imidazole glycerol phosphate synthase subunit HisH (224 aa).

The region spanning 5-214 (DTIIIDTGCA…MKMNAGSFAG (210 aa)) is the Glutamine amidotransferase type-1 domain. Residue Cys80 is the Nucleophile of the active site. Catalysis depends on residues His189 and Glu191.

In terms of assembly, heterodimer of HisH and HisF.

It is found in the cytoplasm. The enzyme catalyses 5-[(5-phospho-1-deoxy-D-ribulos-1-ylimino)methylamino]-1-(5-phospho-beta-D-ribosyl)imidazole-4-carboxamide + L-glutamine = D-erythro-1-(imidazol-4-yl)glycerol 3-phosphate + 5-amino-1-(5-phospho-beta-D-ribosyl)imidazole-4-carboxamide + L-glutamate + H(+). It catalyses the reaction L-glutamine + H2O = L-glutamate + NH4(+). It participates in amino-acid biosynthesis; L-histidine biosynthesis; L-histidine from 5-phospho-alpha-D-ribose 1-diphosphate: step 5/9. Its function is as follows. IGPS catalyzes the conversion of PRFAR and glutamine to IGP, AICAR and glutamate. The HisH subunit catalyzes the hydrolysis of glutamine to glutamate and ammonia as part of the synthesis of IGP and AICAR. The resulting ammonia molecule is channeled to the active site of HisF. The polypeptide is Imidazole glycerol phosphate synthase subunit HisH (Shewanella loihica (strain ATCC BAA-1088 / PV-4)).